Consider the following 950-residue polypeptide: MMQQYQSNSYLFGGNAPYVEELYEAYLQNPASVPDNWRAYFDAMQNVPAVDGSNGRDIPHAPIVASFAERAKQGPIRTIVASADSDMGRKRVAATQLIAAYRNIGSHWADLDPLKRQERPPLPDLDPAFYGFSEADLDIVFNASNTYFGKESMSLRELLNNLRETYCGTIGFEFMYVSDQAQKRWWQERLETTRSKPVFTLEKKKHILDRLTAAEGLERFLHTKYVGQKRFSLEGGESFIAAMDELIQHAGSKGVQEIVIGMAHRGRLNVLVNTLGKMPADLFAEFEGKHVDDLPAGDVKYHKGFSSDVSTEGGPVHLSLAFNPSHLEIVNPVVEGSAKARQERRGEVGHKEVLPVQVHGDAAFAGQGVVMETLNLAQTRGYGTGGSMHIVINNQIGFTTSDPRDARSTLYCTDVVKMIEAPVLHVNGDDPEAVVYAMQLAVDFRMEFKKDVVVDIICFRKLGHNEQDTPAVTQPLMYKKIAQHPGTRKLYADKLAAQNLVPAEFGDEKVKAYRAAMDAGKHTADPVLSNFKNKFAVDWMPFLNRKWTDAADTAVPVTELKRLAERITTTPETLKLHPLVEKVVKDRANMGRGDQPLDWGMGEHLAFASLVSSGYPVRITGQDAGRGTFTHRHAVLHDQARERWDAGSYVPLQNVSENQAPFTVIDSVLSEEAVLGFEYGYSAAEPNALVIWEAQFGDFVNGAQVVIDQFISSGEVKWGRASGLTLMLPHGYEGQGPEHSSARIERFLQLCADHNMQVCQPTTPAQIFHLLRRQMIRLFRKPLVIMTPKSLLRNKDAVSPLSDLAKGHFETVIPDHEELNASKVKRVIMCSGKVYYDLVNTRKEREANDTAVIRLEQLYPFPHKAVAAELKKYPNATEIVWCQDEPQNQGAWFFVQHYIMENMTDGQKLGYAGRPASASPAVGYYAKHNEQQKALLEAAFAKLKGFVLTK.

The protein belongs to the alpha-ketoglutarate dehydrogenase family. In terms of assembly, homodimer. Part of the 2-oxoglutarate dehydrogenase (OGDH) complex composed of E1 (2-oxoglutarate dehydrogenase), E2 (dihydrolipoamide succinyltransferase) and E3 (dihydrolipoamide dehydrogenase); the complex contains multiple copies of the three enzymatic components (E1, E2 and E3). The cofactor is thiamine diphosphate.

The enzyme catalyses N(6)-[(R)-lipoyl]-L-lysyl-[protein] + 2-oxoglutarate + H(+) = N(6)-[(R)-S(8)-succinyldihydrolipoyl]-L-lysyl-[protein] + CO2. Its function is as follows. E1 component of the 2-oxoglutarate dehydrogenase (OGDH) complex which catalyzes the decarboxylation of 2-oxoglutarate, the first step in the conversion of 2-oxoglutarate to succinyl-CoA and CO(2). The chain is 2-oxoglutarate dehydrogenase E1 component (odhA) from Cupriavidus necator (strain ATCC 17699 / DSM 428 / KCTC 22496 / NCIMB 10442 / H16 / Stanier 337) (Ralstonia eutropha).